The following is an 819-amino-acid chain: Probable phosphoenolpyruvate synthase (819 aa).

H441 acts as the Tele-phosphohistidine intermediate in catalysis. Residues R540, R587, E684, G706, T707, N708, and D709 each contribute to the substrate site. Mg(2+) is bound at residue E684. D709 is a binding site for Mg(2+). C756 acts as the Proton donor in catalysis.

This sequence belongs to the PEP-utilizing enzyme family. It depends on Mg(2+) as a cofactor.

It carries out the reaction pyruvate + ATP + H2O = phosphoenolpyruvate + AMP + phosphate + 2 H(+). Its pathway is carbohydrate biosynthesis; gluconeogenesis. Catalyzes the phosphorylation of pyruvate to phosphoenolpyruvate. This chain is Probable phosphoenolpyruvate synthase (ppsA), found in Pyrococcus abyssi (strain GE5 / Orsay).